The following is a 118-amino-acid chain: Large ribosomal subunit protein bL19 (118 aa).

It belongs to the bacterial ribosomal protein bL19 family.

In terms of biological role, this protein is located at the 30S-50S ribosomal subunit interface and may play a role in the structure and function of the aminoacyl-tRNA binding site. The polypeptide is Large ribosomal subunit protein bL19 (Teredinibacter turnerae (strain ATCC 39867 / T7901)).